Consider the following 228-residue polypeptide: uncharacterized protein (228 aa).

Positions 1 to 15 (MKQKYLFIASMALAG) are cleaved as a signal peptide. Residue C16 is the site of N-palmitoyl cysteine attachment. C16 is lipidated: S-diacylglycerol cysteine.

To P.multocida PM0015.

Its subcellular location is the cell membrane. This is an uncharacterized protein from Pasteurella multocida (strain Pm70).